The sequence spans 125 residues: SOSS complex subunit C homolog A (125 aa).

The span at 1 to 16 (MAFPNTSAQQAETNSK) shows a compositional bias: polar residues. 3 disordered regions span residues 1-20 (MAFP…SLEE), 38-74 (SNTN…AAFN), and 105-125 (PATP…NNPK).

Belongs to the SOSS-C family.

This chain is SOSS complex subunit C homolog A, found in Drosophila willistoni (Fruit fly).